We begin with the raw amino-acid sequence, 1310 residues long: Multidrug resistance protein 4 (1310 aa).

5 helical membrane passes run W48–T68, M125–V145, K196–A216, L223–A243, and G299–L319. Residues A55–T368 form the ABC transmembrane type-1 1 domain. The N-linked (GlcNAc...) asparagine glycan is linked to N336. The helical transmembrane segment at V342–P362 threads the bilayer. The N-linked (GlcNAc...) asparagine glycan is linked to N402. Positions I403–R642 constitute an ABC transporter 1 domain. G438–S445 lines the ATP pocket. The N-linked (GlcNAc...) asparagine glycan is linked to N608. Transmembrane regions (helical) follow at residues W721–F741 and I773–F793. In terms of domain architecture, ABC transmembrane type-1 2 spans F722–K1030. Residue N816 is glycosylated (N-linked (GlcNAc...) asparagine). 3 helical membrane passes run V849–Y869, W871–N891, and I945–T965. One can recognise an ABC transporter 2 domain in the interval I1065–Q1304. G1100–S1107 contributes to the ATP binding site.

The protein belongs to the ABC transporter superfamily. ABCB family. Multidrug resistance exporter (TC 3.A.1.201) subfamily.

It localises to the membrane. It carries out the reaction ATP + H2O + xenobioticSide 1 = ADP + phosphate + xenobioticSide 2.. Energy-dependent efflux pump responsible for decreased drug accumulation in multidrug resistance parasites. In Entamoeba histolytica (strain ATCC 30459 / HM-1:IMSS / ABRM), this protein is Multidrug resistance protein 4.